A 308-amino-acid polypeptide reads, in one-letter code: CD276 antigen homolog (308 aa).

Positions 1–15 (MAALCLLLLLSLAEA) are cleaved as a signal peptide. Residues 16–236 (IDLRVPELPV…VTGQHLSFPP (221 aa)) lie on the Extracellular side of the membrane. In terms of domain architecture, Ig-like V-type spans 21–125 (PELPVIGLLD…VQNSSSASVS (105 aa)). 2 disulfide bridges follow: Cys-37–Cys-112 and Cys-155–Cys-210. Residues 135–228 (PTLHLEPSEA…DVTHASLTVT (94 aa)) form the Ig-like C2-type domain. The chain crosses the membrane as a helical span at residues 237–257 (LVLWVTVGLSICLLCLLVALA). Topologically, residues 258–308 (CVCRKHLKQTCEEEQENAGNEEHEENGELKTAMQPLKVTSPGEDDDAECLE) are cytoplasmic. The interval 270–308 (EEQENAGNEEHEENGELKTAMQPLKVTSPGEDDDAECLE) is disordered. The span at 299-308 (GEDDDAECLE) shows a compositional bias: acidic residues.

The protein belongs to the immunoglobulin superfamily. BTN/MOG family.

The protein localises to the membrane. In terms of biological role, modulates immune responses. This chain is CD276 antigen homolog (cd276), found in Xenopus laevis (African clawed frog).